A 241-amino-acid polypeptide reads, in one-letter code: Cysteine-rich secretory protein 3 (241 aa).

An N-terminal signal peptide occupies residues 1 to 19 (MALMLVLFFLAAVLPPSLL). The SCP domain maps to 44–170 (SKHNQLRRKV…PLRYFYVCRY (127 aa)). Asn118, Asn132, and Asn175 each carry an N-linked (GlcNAc...) asparagine glycan. Cystine bridges form between Cys194/Cys201, Cys197/Cys206, Cys210/Cys241, Cys219/Cys235, and Cys226/Cys239. In terms of domain architecture, ShKT spans 210 to 241 (CQYKDMSFWCKRLEYVCKHPGLKKRCLATCQC).

Belongs to the CRISP family. Interacts with A1BG. Interacts with KNG1 isoform LMW. As to expression, expressed in submandibular gland.

It is found in the cytoplasmic vesicle. It localises to the secretory vesicle. Its function is as follows. This protein is supposed to help spermatozoa undergo functional maturation while they move from the testis to the ductus deferens. This Mus musculus (Mouse) protein is Cysteine-rich secretory protein 3 (Crisp3).